A 400-amino-acid chain; its full sequence is Tryptophan synthase beta chain (400 aa).

Lysine 92 is modified (N6-(pyridoxal phosphate)lysine).

It belongs to the TrpB family. In terms of assembly, tetramer of two alpha and two beta chains. Pyridoxal 5'-phosphate serves as cofactor.

The enzyme catalyses (1S,2R)-1-C-(indol-3-yl)glycerol 3-phosphate + L-serine = D-glyceraldehyde 3-phosphate + L-tryptophan + H2O. It participates in amino-acid biosynthesis; L-tryptophan biosynthesis; L-tryptophan from chorismate: step 5/5. In terms of biological role, the beta subunit is responsible for the synthesis of L-tryptophan from indole and L-serine. In Neisseria gonorrhoeae, this protein is Tryptophan synthase beta chain.